We begin with the raw amino-acid sequence, 490 residues long: Gallate decarboxylase (490 aa).

Aspartate 165 provides a ligand contact to Mn(2+). Prenylated FMN-binding positions include 168–170 and glycine 187; that span reads IHR. Residue glutamate 233 participates in Mn(2+) binding. Glutamate 289 acts as the Proton acceptor in catalysis.

The protein belongs to the UbiD family. The cofactor is prenylated FMN. It depends on Mn(2+) as a cofactor.

The enzyme catalyses 3,4,5-trihydroxybenzoate + H(+) = 1,2,3-trihydroxybenzene + CO2. It carries out the reaction 3,4-dihydroxybenzoate + H(+) = catechol + CO2. In terms of biological role, involved in tannin degradation. Catalyzes the decarboxylation of gallic acid and protocatechuic acid to pyrogallol and catechol, respectively. This chain is Gallate decarboxylase, found in Lactiplantibacillus plantarum (strain ATCC BAA-793 / NCIMB 8826 / WCFS1) (Lactobacillus plantarum).